Here is a 305-residue protein sequence, read N- to C-terminus: Putative ankyrin repeat protein RF_0580 (305 aa).

ANK repeat units lie at residues 5–34 (YNKN…NIDE), 39–68 (RGET…SPNI), 72–101 (SGQT…NIDL), 107–136 (CGHS…DINS), 140–169 (FGAS…DVNA), 173–202 (YEDT…DVNI), and 206–235 (NNFT…TIKI).

The protein is Putative ankyrin repeat protein RF_0580 of Rickettsia felis (strain ATCC VR-1525 / URRWXCal2) (Rickettsia azadi).